A 257-amino-acid chain; its full sequence is Cytochrome b561 domain-containing protein At2g30890 (257 aa).

An N-terminal signal peptide occupies residues 1–21; sequence MEIHHQLLVSLLFLLLPLCSS. The Cytochrome b561 domain occupies 22-219; sequence QENTRSLAID…LFQDKWSYIQ (198 aa). Helical transmembrane passes span 55–75, 91–111, 125–145, 157–177, and 191–211; these read VHGF…IISI, LFFL…IGAV, HQQL…LGFL, WFVG…INIY, and ANLW…VYLF. Heme b is bound by residues His56, His95, His125, and His161. The disordered stretch occupies residues 235–257; sequence NISTAETGHGYEVEESKPELEKC. Positions 243 to 257 are enriched in basic and acidic residues; that stretch reads HGYEVEESKPELEKC.

The cofactor is heme b.

It is found in the membrane. This is Cytochrome b561 domain-containing protein At2g30890 from Arabidopsis thaliana (Mouse-ear cress).